A 209-amino-acid chain; its full sequence is ATP synthase subunit b 2 (209 aa).

Residues 9–29 (WWGWVTLSVLVMVAGDGTLAF) traverse the membrane as a helical segment.

The protein belongs to the ATPase B chain family. As to quaternary structure, F-type ATPases have 2 components, F(1) - the catalytic core - and F(0) - the membrane proton channel. F(1) has five subunits: alpha(3), beta(3), gamma(1), delta(1), epsilon(1). F(0) has three main subunits: a(1), b(2) and c(10-14). The alpha and beta chains form an alternating ring which encloses part of the gamma chain. F(1) is attached to F(0) by a central stalk formed by the gamma and epsilon chains, while a peripheral stalk is formed by the delta and b chains.

Its subcellular location is the cell inner membrane. In terms of biological role, f(1)F(0) ATP synthase produces ATP from ADP in the presence of a proton or sodium gradient. F-type ATPases consist of two structural domains, F(1) containing the extramembraneous catalytic core and F(0) containing the membrane proton channel, linked together by a central stalk and a peripheral stalk. During catalysis, ATP synthesis in the catalytic domain of F(1) is coupled via a rotary mechanism of the central stalk subunits to proton translocation. Its function is as follows. Component of the F(0) channel, it forms part of the peripheral stalk, linking F(1) to F(0). The polypeptide is ATP synthase subunit b 2 (Desulfosudis oleivorans (strain DSM 6200 / JCM 39069 / Hxd3) (Desulfococcus oleovorans)).